A 239-amino-acid polypeptide reads, in one-letter code: Homeobox protein Nkx-2.8 (239 aa).

A compositionally biased stretch (polar residues) spans 1–11 (MATSGRLSFTV). Residues 1–87 (MATSGRLSFT…GSDAEKRKKR (87 aa)) form a disordered region. Over residues 21–32 (DAQHLPRREPEP) the composition is skewed to basic and acidic residues. Low complexity predominate over residues 62–79 (SPPDSSQRPSARPASPGS). The homeobox DNA-binding region spans 84 to 143 (RKKRRVLFSKAQTLELERRFRQQRYLSAPEREQLASLLRLTPTQVKIWFQNHRYKLKRAR).

Belongs to the NK-2 homeobox family.

It is found in the nucleus. This is Homeobox protein Nkx-2.8 (NKX2-8) from Homo sapiens (Human).